The following is a 446-amino-acid chain: Branched-chain amino acid permease BrnQ (446 aa).

A run of 12 helical transmembrane segments spans residues 13-33, 41-61, 81-101, 120-140, 154-174, 196-216, 237-257, 285-305, 325-345, 347-367, 381-401, and 421-441; these read ISSM…PAYL, LWIS…LAIA, KYSY…FAIP, MAKS…MLFF, FLTP…LLHP, VLAG…IIVI, TGVL…LVGA, GAVI…IGLI, WAII…TTII, FSLP…LLAL, IMTA…LPAG, and GLGW…KGVI.

The protein belongs to the branched chain amino acid transporter family.

The protein resides in the cell membrane. Leucine uptake is inhibited by the proton ionophore carbonyl cyanide m-chlorophenylhydrazone (CCCP). In terms of biological role, branched chain amino acid transport system which is involved in the uptake of leucine, valine and isoleucine. The proton motive force is probably the driving force for transport. In Lactobacillus delbrueckii subsp. lactis, this protein is Branched-chain amino acid permease BrnQ.